A 431-amino-acid polypeptide reads, in one-letter code: Probable prephenate dehydrogenase [NADP(+)] (431 aa).

NADP(+) is bound at residue 5–34 (FQVGIIGFGDMGRLYAEYISKAGWRVNVCD). One can recognise a Prephenate/arogenate dehydrogenase domain in the interval 5-285 (FQVGIIGFGD…GENMDRNSSG (281 aa)).

This sequence belongs to the prephenate/arogenate dehydrogenase family.

It is found in the cytoplasm. It carries out the reaction prephenate + NADP(+) = 3-(4-hydroxyphenyl)pyruvate + CO2 + NADPH. Its pathway is amino-acid biosynthesis; L-tyrosine biosynthesis; (4-hydroxyphenyl)pyruvate from prephenate (NADP(+) route): step 1/1. This is Probable prephenate dehydrogenase [NADP(+)] (tyr1) from Schizosaccharomyces pombe (strain 972 / ATCC 24843) (Fission yeast).